The primary structure comprises 206 residues: Ras-related protein Rab-7a (206 aa).

Position 15–22 (15–22 (GDSGVGKT)) interacts with GTP. 2 positions are modified to phosphoserine: Ser17 and Ser23. Phosphothreonine is present on residues Thr34, Thr40, and Thr64. GTP-binding positions include 34-40 (TQQYRAT) and 63-67 (DTAGQ). The short motif at 37–45 (YRATVGADF) is the Effector region element. Ser72 carries the post-translational modification Phosphoserine. 2 positions are modified to phosphotyrosine: Tyr78 and Tyr88. Residues 125-128 (NKLD) and 157-158 (AK) contribute to the GTP site. 2 S-geranylgeranyl cysteine lipidation sites follow: Cys205 and Cys206.

Belongs to the small GTPase superfamily. Rab family.

It localises to the cytoplasmic vesicle. Its subcellular location is the phagosome membrane. The protein resides in the late endosome membrane. The protein localises to the lysosome membrane. It is found in the autophagosome membrane. It localises to the lipid droplet. It carries out the reaction GTP + H2O = GDP + phosphate + H(+). Its function is as follows. Small GTPase which cycles between active GTP-bound and inactive GDP-bound states. In its active state, binds to a variety of effector proteins playing a key role in the regulation of endo-lysosomal trafficking. Governs early-to-late endosomal maturation, microtubule minus-end as well as plus-end directed endosomal migration and positioning, and endosome-lysosome transport through different protein-protein interaction cascades. Involved in lipophagy, a cytosolic lipase-independent autophagic pathway. Plays a role in phagocyte formation and acidification. The protein is Ras-related protein Rab-7a of Paramecium octaurelia.